A 120-amino-acid chain; its full sequence is BolA-like protein 2 (120 aa).

Belongs to the BolA/IbaG family. Interacts with FRA1, GRX3 and GRX4.

The protein localises to the cytoplasm. Its subcellular location is the nucleus. Involved in the regulation of the iron regulon in response to decreased mitochondrial iron-sulfur cluster synthesis. May be involved in mitochondrial organization and biogenesis. The protein is BolA-like protein 2 (BOL2) of Saccharomyces cerevisiae (strain ATCC 204508 / S288c) (Baker's yeast).